We begin with the raw amino-acid sequence, 962 residues long: MRSAGREPLPRRSPRWRRASPLCETSAGWRVSQLRRDDLRRPSTMKGKERSPVKPKRSRGGEDSSSRGERSKKLGGSGGSNGSSSGKTDSGGSRRSLHLDKSSSRGGSREYETGGGSSSSRLHSYSSPSTKNSSGGGESRSSSRGGGGESRSSGAASSAPGGGDGVEYKTLKISELGSQLSDEAVEDGLFHEFKRFGDVSVKISHLSGSGSGDERVAFVNFRRPEDARAAKHARGRLVLYDRPLKIEAVYVSRRRSRSPLDKDAYAPSSSVVGTSVGSHRHAPGGGGGQRSLSPGGAALGYRDYRLQQLALGRLPPPPPPPLPRELERERDYPFYDRVRPAYSLEPRVGAGAGAAPFREVDEISPEDDQRANRTLFLGNLDITVTENDLRRAFDRFGVITEVDIKRPSRGQTSTYGFLKFENLDMSHRAKLAMSGKIIIRNPIKIGYGKATPTTRLWVGGLGPWVPLAALAREFDRFGTIRTIDYRKGDSWAYIQYESLDAAHAAWTHMRGFPLGGPDRRLRVDFADTEHRYQQQYLQPLPLTHYELVTDTFGHRAPDPLRSARDRTPPLLYRDRDRDLYTDSDWVPPPPPVRERSARAATSAVTAYEPLDSLDRRRDGWSLDRDRGDRDLPSSRDQPRKRRLPEESGGRHLDRSPESERPRKQRHCTPSPDRSPELSSNRDRYNSDNDRSSRLLLLERSSPVRDRRGSLEKSQSDKRDRKNSASAERDRKHRTAAPTEGKNPLKKEDRSDGNAPSASTSSSKQKPPSQKQDGGTAPVAASSPKLCLAWQGMLLLKNSNFPSNMHLLQGDLQVASSLLVEGSTGGKVAQLKITQRLRLDQPKLDEVTRRIKVAGPNGYAILLAVPGSSDSRSSSSSATSDTAASTQRPLRNLVSYLKQKQAAGVISLPVGGNKDKENTGVLHAFPPCEFSQQFLDSPAKALAKSEEDYLVMIIVRAKLVNSG.

Basic and acidic residues-rich tracts occupy residues 1-10 (MRSAGREPLP), 34-52 (LRRDDLRRPSTMKGKERSP), and 59-72 (RGGEDSSSRGERSK). The tract at residues 1 to 167 (MRSAGREPLP…SAPGGGDGVE (167 aa)) is disordered. The segment covering 82 to 94 (GSSSGKTDSGGSR) has biased composition (low complexity). Positions 97–112 (LHLDKSSSRGGSREYE) are enriched in basic and acidic residues. Ser108 is subject to Phosphoserine. Residues 118–129 (SSSRLHSYSSPS) show a composition bias toward low complexity. The span at 134–149 (SGGGESRSSSRGGGGE) shows a compositional bias: gly residues. The segment covering 150–159 (SRSSGAASSA) has biased composition (low complexity). Positions 169–251 (KTLKISELGS…RPLKIEAVYV (83 aa)) constitute an RRM 1 domain. Residues Ser178, Ser207, and Ser209 each carry the phosphoserine modification. Lys245 is covalently cross-linked (Glycyl lysine isopeptide (Lys-Gly) (interchain with G-Cter in SUMO2)). 3 positions are modified to phosphoserine: Ser252, Ser256, and Ser258. The tract at residues 257 to 297 (RSPLDKDAYAPSSSVVGTSVGSHRHAPGGGGGQRSLSPGGA) is disordered. At Tyr265 the chain carries Phosphotyrosine. Residues 268 to 277 (SSSVVGTSVG) are compositionally biased toward low complexity. Ser291, Ser293, and Ser364 each carry phosphoserine. RRM domains are found at residues 373–450 (RTLF…YGKA) and 454–528 (TRLW…FADT). Residues Lys405, Lys419, and Lys444 each participate in a glycyl lysine isopeptide (Lys-Gly) (interchain with G-Cter in SUMO2) cross-link. Residue Lys449 is modified to N6-acetyllysine. Composition is skewed to basic and acidic residues over residues 553–580 (GHRAPDPLRSARDRTPPLLYRDRDRDLY) and 612–661 (SLDR…SERP). Residues 553–779 (GHRAPDPLRS…KQDGGTAPVA (227 aa)) form a disordered region. Thr567 carries the phosphothreonine modification. At Arg577 the chain carries Asymmetric dimethylarginine; alternate; by PRMT1. Omega-N-methylarginine; alternate; by PRMT1 is present on Arg577. Residues Ser621, Ser655, Ser670, Ser674, and Ser701 each carry the phosphoserine modification. Basic and acidic residues-rich tracts occupy residues 673-692 (RSPELSSNRDRYNSDNDRSS), 701-729 (SPVRDRRGSLEKSQSDKRDRKNSASAERD), and 742-751 (NPLKKEDRSD). Lys745 participates in a covalent cross-link: Glycyl lysine isopeptide (Lys-Gly) (interchain with G-Cter in SUMO2). A compositionally biased stretch (low complexity) spans 754–771 (APSASTSSSKQKPPSQKQ). Ser768 and Ser782 each carry phosphoserine. The region spanning 778-957 (VAASSPKLCL…YLVMIIVRAK (180 aa)) is the SPOC domain. The tract at residues 866–885 (GSSDSRSSSSSATSDTAAST) is disordered. Over residues 867-885 (SSDSRSSSSSATSDTAAST) the composition is skewed to low complexity. Ser936 carries the post-translational modification Phosphoserine.

This sequence belongs to the RRM Spen family. In terms of assembly, component of the WMM complex, a N6-methyltransferase complex composed of a catalytic subcomplex, named MAC, and of an associated subcomplex, named MACOM. The MAC subcomplex is composed of METTL3 and METTL14. The MACOM subcomplex is composed of WTAP, ZC3H13, CBLL1/HAKAI, VIRMA, and, in some cases of RBM15 (RBM15 or RBM15B). Also a component of a MACOM-like complex, named WTAP complex, composed of WTAP, ZC3H13, CBLL1, VIRMA, RBM15, BCLAF1 and THRAP3. Interacts with RBPJ. Interacts (via SPOC domain) with SETD1B. Interacts with NXF1, the interaction is required to promote mRNA export. Interacts with SF3B1. Methylated at Arg-577 by PRMT1, leading to promote ubiquitination by CNOT4 and subsequent degradation by the proteasome. Post-translationally, ubiquitinated by CNOT4 following methylation at Arg-577 by PRMT1.

It is found in the nucleus speckle. Its subcellular location is the nucleus. The protein localises to the nucleoplasm. It localises to the nucleus envelope. The protein resides in the nucleus membrane. Its function is as follows. RNA-binding protein that acts as a key regulator of N6-methyladenosine (m6A) methylation of RNAs, thereby regulating different processes, such as hematopoietic cell homeostasis, alternative splicing of mRNAs and X chromosome inactivation mediated by Xist RNA. Associated component of the WMM complex, a complex that mediates N6-methyladenosine (m6A) methylation of RNAs, a modification that plays a role in the efficiency of mRNA splicing and RNA processing. Plays a key role in m6A methylation, possibly by binding target RNAs and recruiting the WMM complex. Involved in random X inactivation mediated by Xist RNA: acts by binding Xist RNA and recruiting the WMM complex, which mediates m6A methylation, leading to target YTHDC1 reader on Xist RNA and promoting transcription repression activity of Xist. Required for the development of multiple tissues, such as the maintenance of the homeostasis of long-term hematopoietic stem cells and for megakaryocyte (MK) and B-cell differentiation. Regulates megakaryocyte differentiation by regulating alternative splicing of genes important for megakaryocyte differentiation; probably regulates alternative splicing via m6A regulation. Required for placental vascular branching morphogenesis and embryonic development of the heart and spleen. Acts as a regulator of thrombopoietin response in hematopoietic stem cells by regulating alternative splicing of MPL. May also function as an mRNA export factor, stimulating export and expression of RTE-containing mRNAs which are present in many retrotransposons that require to be exported prior to splicing. High affinity binding of pre-mRNA to RBM15 may allow targeting of the mRNP to the export helicase DBP5 in a manner that is independent of splicing-mediated NXF1 deposition, resulting in export prior to splicing. May be implicated in HOX gene regulation. This Mus musculus (Mouse) protein is RNA-binding protein 15.